A 293-amino-acid chain; its full sequence is Membrane protein RL13 (293 aa).

Residues 1-19 form the signal peptide; sequence MHWHLAITWTVIILTFSEC. Residues 245–265 form a helical membrane-spanning segment; that stretch reads IPLGIHAVWAGIVVSVALIAL.

The protein localises to the virion membrane. In terms of biological role, may play a role in modifying tropism or in modulating cell signaling during virus entry. Since RL13 expression severely impairs HCMV replication in epithelial cell cultures, it may act as a regulator promoting persistence by suppressing the switch to fully lytic infection. The polypeptide is Membrane protein RL13 (RL13) (Human cytomegalovirus (strain Merlin) (HHV-5)).